The chain runs to 331 residues: Adenosine deaminase (331 aa).

Residues His-12 and His-14 each contribute to the Zn(2+) site. His-14, Asp-16, and Gly-170 together coordinate substrate. Zn(2+) is bound at residue His-197. Catalysis depends on Glu-200, which acts as the Proton donor. Position 278 (Asp-278) interacts with Zn(2+). Asp-279 lines the substrate pocket.

The protein belongs to the metallo-dependent hydrolases superfamily. Adenosine and AMP deaminases family. Adenosine deaminase subfamily. The cofactor is Zn(2+).

It carries out the reaction adenosine + H2O + H(+) = inosine + NH4(+). It catalyses the reaction 2'-deoxyadenosine + H2O + H(+) = 2'-deoxyinosine + NH4(+). Catalyzes the hydrolytic deamination of adenosine and 2-deoxyadenosine. This chain is Adenosine deaminase, found in Shewanella sp. (strain MR-7).